A 207-amino-acid chain; its full sequence is Ribonuclease HII (207 aa).

The 194-residue stretch at 12 to 205 folds into the RNase H type-2 domain; that stretch reads GLVVGIDEVG…IRNMIEAEAH (194 aa). Positions 18, 19, and 114 each coordinate a divalent metal cation.

Belongs to the RNase HII family. Mn(2+) is required as a cofactor. It depends on Mg(2+) as a cofactor.

Its subcellular location is the cytoplasm. It catalyses the reaction Endonucleolytic cleavage to 5'-phosphomonoester.. Endonuclease that specifically degrades the RNA of RNA-DNA hybrids. This is Ribonuclease HII from Gluconobacter oxydans (strain 621H) (Gluconobacter suboxydans).